An 863-amino-acid chain; its full sequence is uncharacterized protein (863 aa).

Positions 1 to 29 (MHQSGSVSLCRSAISVLVATALYSPIALA) are cleaved as a signal peptide. Positions 595–863 (GVSYDTAMWS…NTQAGVVWTF (269 aa)) constitute an Autotransporter domain.

The protein localises to the cell outer membrane. This is an uncharacterized protein from Escherichia coli (strain K12).